A 357-amino-acid chain; its full sequence is MLVLGIETTCDETAAAVIERAPDGIGKILSNIVRSQVDEHAPFGGVVPEIAARAHVDLLDGIIDRAMREAGIGFAQLNGVAAAAGPGLIGGVIVGLTTAKAIALVHDTPLVAVNHLEAHALTPRLTDGIEFPYCLFLASGGHTQIVAVTGVGQYVRLGTTVDDAIGEAFDKVAKMLGLPYPGGPQVERAAAGGDAARFAFPRPMQGRPDANFSLSGLKTAVRNEASRIAEITPQDISDLCASFQAAVLEATADRLNVGLRLFREQFGAPRALVAAGGVAANQAIRGALHDVARQAKTQLIMPPPALCTDNGAMIAWAGAERLALGMTDTMEAQPRARWLLDANATAPAGYGKTRAGF.

2 residues coordinate Fe cation: His-115 and His-119. Substrate is bound by residues 137 to 141, Asp-170, Gly-183, and Asn-281; that span reads LASGG. Asp-309 serves as a coordination point for Fe cation.

This sequence belongs to the KAE1 / TsaD family. Requires Fe(2+) as cofactor.

The protein resides in the cytoplasm. It carries out the reaction L-threonylcarbamoyladenylate + adenosine(37) in tRNA = N(6)-L-threonylcarbamoyladenosine(37) in tRNA + AMP + H(+). Required for the formation of a threonylcarbamoyl group on adenosine at position 37 (t(6)A37) in tRNAs that read codons beginning with adenine. Is involved in the transfer of the threonylcarbamoyl moiety of threonylcarbamoyl-AMP (TC-AMP) to the N6 group of A37, together with TsaE and TsaB. TsaD likely plays a direct catalytic role in this reaction. The protein is tRNA N6-adenosine threonylcarbamoyltransferase of Bradyrhizobium diazoefficiens (strain JCM 10833 / BCRC 13528 / IAM 13628 / NBRC 14792 / USDA 110).